Reading from the N-terminus, the 43-residue chain is Photosystem I reaction center subunit IX (43 aa).

Residues 7–27 (YLSTAPVLATFWFGLLAGLLI) form a helical membrane-spanning segment.

The protein belongs to the PsaJ family.

Its subcellular location is the plastid. It is found in the chloroplast thylakoid membrane. Its function is as follows. May help in the organization of the PsaE and PsaF subunits. This is Photosystem I reaction center subunit IX from Gnetum parvifolium (Small-leaved jointfir).